The sequence spans 391 residues: Ferrochelatase (391 aa).

2 residues coordinate Fe cation: His196 and Glu281.

It belongs to the ferrochelatase family.

It is found in the cytoplasm. The enzyme catalyses heme b + 2 H(+) = protoporphyrin IX + Fe(2+). The protein operates within porphyrin-containing compound metabolism; protoheme biosynthesis; protoheme from protoporphyrin-IX: step 1/1. Functionally, catalyzes the ferrous insertion into protoporphyrin IX. The polypeptide is Ferrochelatase (Parasynechococcus marenigrum (strain WH8102)).